A 196-amino-acid chain; its full sequence is Probable GTP-binding protein EngB (196 aa).

The 173-residue stretch at 24-196 (ELSEVALSGR…IWNLIEPYIS (173 aa)) folds into the EngB-type G domain. Residues 32 to 39 (GRSNVGKS), 59 to 63 (GKTQT), 77 to 80 (DVPG), 144 to 147 (TKED), and 176 to 178 (YSS) each bind GTP. Mg(2+) is bound by residues Ser-39 and Thr-61.

This sequence belongs to the TRAFAC class TrmE-Era-EngA-EngB-Septin-like GTPase superfamily. EngB GTPase family. The cofactor is Mg(2+).

Its function is as follows. Necessary for normal cell division and for the maintenance of normal septation. This chain is Probable GTP-binding protein EngB, found in Staphylococcus aureus (strain MW2).